The primary structure comprises 108 residues: Small ribosomal subunit protein bS6 (108 aa).

The protein belongs to the bacterial ribosomal protein bS6 family.

Functionally, binds together with bS18 to 16S ribosomal RNA. The chain is Small ribosomal subunit protein bS6 from Trichormus variabilis (strain ATCC 29413 / PCC 7937) (Anabaena variabilis).